The following is a 183-amino-acid chain: MIVGLIGVVEKISALEAHIEVQGVVYGVQVSMRTSALLETGQKVRLKILQVIKEDANLLYGFLEESEKILFERLLKINGVGGRIALAILSSFSPNEFENIIATKEVKRLQQVPGIGKKLADKIMVDLIGFFIQDENRPARNEVFLALESLGFKSAEINKVLKTLKPNLSIEAAIKEALQQLRS.

The segment at 1-63 (MIVGLIGVVE…EDANLLYGFL (63 aa)) is domain I. Residues 64 to 139 (EESEKILFER…FFIQDENRPA (76 aa)) are domain II. Position 139 (Ala139) is a region of interest, flexible linker. The interval 139–183 (ARNEVFLALESLGFKSAEINKVLKTLKPNLSIEAAIKEALQQLRS) is domain III.

The protein belongs to the RuvA family. As to quaternary structure, homotetramer. Forms an RuvA(8)-RuvB(12)-Holliday junction (HJ) complex. HJ DNA is sandwiched between 2 RuvA tetramers; dsDNA enters through RuvA and exits via RuvB. An RuvB hexamer assembles on each DNA strand where it exits the tetramer. Each RuvB hexamer is contacted by two RuvA subunits (via domain III) on 2 adjacent RuvB subunits; this complex drives branch migration. In the full resolvosome a probable DNA-RuvA(4)-RuvB(12)-RuvC(2) complex forms which resolves the HJ.

It localises to the cytoplasm. Functionally, the RuvA-RuvB-RuvC complex processes Holliday junction (HJ) DNA during genetic recombination and DNA repair, while the RuvA-RuvB complex plays an important role in the rescue of blocked DNA replication forks via replication fork reversal (RFR). RuvA specifically binds to HJ cruciform DNA, conferring on it an open structure. The RuvB hexamer acts as an ATP-dependent pump, pulling dsDNA into and through the RuvAB complex. HJ branch migration allows RuvC to scan DNA until it finds its consensus sequence, where it cleaves and resolves the cruciform DNA. The sequence is that of Holliday junction branch migration complex subunit RuvA from Helicobacter pylori (strain HPAG1).